Here is a 322-residue protein sequence, read N- to C-terminus: Sideroflexin-1 (322 aa).

S2 carries the post-translational modification N-acetylserine. Residues 2-102 lie on the Mitochondrial matrix side of the membrane; that stretch reads SGELPPNINI…MSAQVPMNMT (101 aa). A helical membrane pass occupies residues 103–120; that stretch reads ITGCMMTFYRTTPAVLFW. Over 121-146 the chain is Mitochondrial intermembrane; sequence QWINQSFNAVVNYTNRSGDAPLTVNE. Residues 147–167 traverse the membrane as a helical segment; it reads LGTAYVSATTGAVATALGLNA. Topologically, residues 168–174 are mitochondrial matrix; the sequence is LTKHVSP. A helical transmembrane segment spans residues 175–195; sequence LIGRFVPFAAVAAANCINIPL. Residues 196–228 lie on the Mitochondrial intermembrane side of the membrane; the sequence is MRQRELRAGIPVTDENGNRLGESANAAKQAITQ. The helical transmembrane segment at 229–249 threads the bilayer; it reads VVISRILMAAPGMAIPPFIMN. Topologically, residues 250–266 are mitochondrial matrix; that stretch reads TLEKKAFLKRFPWMSAP. Residues 267-287 form a helical membrane-spanning segment; sequence IQVGLVGFCLVFATPLCCALF. Topologically, residues 288 to 322 are mitochondrial intermembrane; the sequence is PQKSSMSVTSLEAELQAKIRETSPELRRVYFNKGL.

It belongs to the sideroflexin family.

Its subcellular location is the mitochondrion inner membrane. The catalysed reaction is L-serine(in) = L-serine(out). The enzyme catalyses L-alanine(in) = L-alanine(out). It catalyses the reaction L-cysteine(in) = L-cysteine(out). Functionally, amino acid transporter importing serine, an essential substrate of the mitochondrial branch of the one-carbon pathway, into mitochondria. Mitochondrial serine is then converted to glycine and formate, which exits to the cytosol where it is used to generate the charged folates that serve as one-carbon donors. May also transport other amino acids including alanine and cysteine. This Sus scrofa (Pig) protein is Sideroflexin-1 (SFXN1).